A 384-amino-acid chain; its full sequence is Proteinase K (384 aa).

The N-terminal stretch at 1–15 (MRLSVLLSLLPLALG) is a signal peptide. A propeptide spanning residues 16–105 (APAVEQRSEA…IEQDAVVTIN (90 aa)) is cleaved from the precursor. An Inhibitor I9 domain is found at 39–104 (KYIVKFKEGS…YIEQDAVVTI (66 aa)). The region spanning 112–384 (PWGLARISST…NLLAYNNYQA (273 aa)) is the Peptidase S8 domain. Residue T121 coordinates Ca(2+). Residues C139 and C228 are joined by a disulfide bond. Active-site charge relay system residues include D144 and H174. Positions 280, 282, and 305 each coordinate Ca(2+). Cysteines 283 and 354 form a disulfide. The active-site Charge relay system is S329. A Ca(2+)-binding site is contributed by D365.

The protein belongs to the peptidase S8 family. It depends on Ca(2+) as a cofactor.

The enzyme catalyses Hydrolysis of keratin, and of other proteins with subtilisin-like specificity. Hydrolyzes peptide amides.. Its function is as follows. Hydrolyzes keratin at aromatic and hydrophobic residues. This is Proteinase K (PROK) from Parengyodontium album (Tritirachium album).